A 98-amino-acid chain; its full sequence is NADH-ubiquinone oxidoreductase chain 4L (98 aa).

3 helical membrane-spanning segments follow: residues 1–21 (MSMV…GLLM), 29–49 (SLLC…VTIL), and 61–81 (IILL…LVMV).

It belongs to the complex I subunit 4L family. Core subunit of respiratory chain NADH dehydrogenase (Complex I) which is composed of 45 different subunits.

It is found in the mitochondrion inner membrane. It carries out the reaction a ubiquinone + NADH + 5 H(+)(in) = a ubiquinol + NAD(+) + 4 H(+)(out). Core subunit of the mitochondrial membrane respiratory chain NADH dehydrogenase (Complex I) which catalyzes electron transfer from NADH through the respiratory chain, using ubiquinone as an electron acceptor. Part of the enzyme membrane arm which is embedded in the lipid bilayer and involved in proton translocation. In Eumetopias jubatus (Steller sea lion), this protein is NADH-ubiquinone oxidoreductase chain 4L (MT-ND4L).